Consider the following 402-residue polypeptide: Cytochrome b561 and DOMON domain-containing protein At4g17280 (402 aa).

A signal peptide spans 1 to 31; sequence MSNHMSIMKFLNQILCLSLILSISMTTLSFA. One can recognise a DOMON domain in the interval 54-171; that stretch reads LDSFLHYTYE…GTINTVWQDG (118 aa). Residues 183–379 enclose the Cytochrome b561 domain; that stretch reads TSGNNVRSVS…LEAFTWYVVI (197 aa). 2 helical membrane-spanning segments follow: residues 218–238 and 250–270; these read IHGI…AIIA and AWFY…VAGW. 3 residues coordinate heme b: H219, H255, and H288. A helical membrane pass occupies residues 290 to 310; it reads AIGIALFSLATVQVFAMFLRP. Residue H324 participates in heme b binding. The next 2 helical transmembrane spans lie at 326-346 and 359-379; these read TIGY…LGIL and IIVV…YVVI.

Requires heme b as cofactor.

It localises to the membrane. Its function is as follows. May act as a catecholamine-responsive trans-membrane electron transporter. In Arabidopsis thaliana (Mouse-ear cress), this protein is Cytochrome b561 and DOMON domain-containing protein At4g17280.